An 88-amino-acid polypeptide reads, in one-letter code: uncharacterized protein (88 aa).

The helical transmembrane segment at 34–54 threads the bilayer; it reads IIIAVILIFFLTIVGLFYLII.

The protein localises to the membrane. This is an uncharacterized protein from Ureaplasma parvum serovar 3 (strain ATCC 700970).